The chain runs to 123 residues: Probable non-functional immunoglobulin lambda variable 11-55 (123 aa).

Positions 1–19 (MALTPLLLLLLSHCTGSLS) are cleaved as a signal peptide. The tract at residues 20 to 44 (RPVLTQPPSLSASPGATARLPCTLS) is framework-1. Residues 21–123 (PVLTQPPSLS…YCQVYESSAN (103 aa)) enclose the Ig-like domain. Cysteines 41 and 115 form a disulfide. The segment at 45–53 (SDLSVGGKN) is complementarity-determining-1. The interval 54–70 (MFWYQQKLGSSPRLFLY) is framework-2. The complementarity-determining-2 stretch occupies residues 71 to 77 (HYSDSDK). The tract at residues 78–115 (QLGPGVPSRVSGSKETSSNTAFLLISGLQPEDEADYYC) is framework-3. The complementarity-determining-3 stretch occupies residues 116–123 (QVYESSAN).

Immunoglobulins are composed of two identical heavy chains and two identical light chains; disulfide-linked.

Its subcellular location is the secreted. The protein resides in the cell membrane. Probable non-functional open reading frame (ORF) of V region of the variable domain of immunoglobulin light chains. Non-functional ORF generally cannot participate in the synthesis of a productive immunoglobulin chain due to altered V-(D)-J or switch recombination and/or splicing site (at mRNA level) and/or conserved amino acid change (protein level). Immunoglobulins, also known as antibodies, are membrane-bound or secreted glycoproteins produced by B lymphocytes. In the recognition phase of humoral immunity, the membrane-bound immunoglobulins serve as receptors which, upon binding of a specific antigen, trigger the clonal expansion and differentiation of B lymphocytes into immunoglobulins-secreting plasma cells. Secreted immunoglobulins mediate the effector phase of humoral immunity, which results in the elimination of bound antigens. The antigen binding site is formed by the variable domain of one heavy chain, together with that of its associated light chain. Thus, each immunoglobulin has two antigen binding sites with remarkable affinity for a particular antigen. The variable domains are assembled by a process called V-(D)-J rearrangement and can then be subjected to somatic hypermutations which, after exposure to antigen and selection, allow affinity maturation for a particular antigen. The sequence is that of Probable non-functional immunoglobulin lambda variable 11-55 from Homo sapiens (Human).